The following is a 250-amino-acid chain: GTP cyclohydrolase 1 (250 aa).

2 stretches are compositionally biased toward basic and acidic residues: residues 1–14 (MEKG…EKPR) and 35–44 (PAEKPPRPEA). Residues 1 to 64 (MEKGPVRAPA…GERPRSEEDN (64 aa)) form a disordered region. A phosphoserine mark is found at Ser60 and Ser81. Residues Cys141, His144, and Cys212 each contribute to the Zn(2+) site.

The protein belongs to the GTP cyclohydrolase I family. As to quaternary structure, toroid-shaped homodecamer, composed of a dimer of pentamers. The inactive isoforms also form decamers and may possibly be incorporated into GCH1 heterodecamers, decreasing enzyme stability and activity. Interacts with AHSA1 and GCHFR/GFRP. In terms of processing, phosphorylated by casein kinase II at Ser-81 in HAECs during oscillatory shear stress; phosphorylation at Ser-81 results in increased enzyme activity. As to expression, in epidermis, expressed predominantly in basal undifferentiated keratinocytes and in some but not all melanocytes (at protein level).

It localises to the cytoplasm. The protein resides in the nucleus. It carries out the reaction GTP + H2O = 7,8-dihydroneopterin 3'-triphosphate + formate + H(+). The protein operates within cofactor biosynthesis; 7,8-dihydroneopterin triphosphate biosynthesis; 7,8-dihydroneopterin triphosphate from GTP: step 1/1. GTP shows a positive allosteric effect, and tetrahydrobiopterin inhibits the enzyme activity. Zinc is required for catalytic activity. Inhibited by Mg(2+). Functionally, positively regulates nitric oxide synthesis in umbilical vein endothelial cells (HUVECs). May be involved in dopamine synthesis. May modify pain sensitivity and persistence. Isoform GCH-1 is the functional enzyme, the potential function of the enzymatically inactive isoforms remains unknown. In Homo sapiens (Human), this protein is GTP cyclohydrolase 1 (GCH1).